The primary structure comprises 513 residues: Glutamate--tRNA ligase 2 (513 aa).

Residues 11-21 (PSPTGFLHIGS) carry the 'HIGH' region motif. Positions 240 to 244 (KLSKR) match the 'KMSKS' region motif. Residue lysine 243 coordinates ATP.

The protein belongs to the class-I aminoacyl-tRNA synthetase family. Glutamate--tRNA ligase type 1 subfamily. Monomer.

It is found in the cytoplasm. It carries out the reaction tRNA(Glu) + L-glutamate + ATP = L-glutamyl-tRNA(Glu) + AMP + diphosphate. Its function is as follows. Catalyzes the attachment of glutamate to tRNA(Glu) in a two-step reaction: glutamate is first activated by ATP to form Glu-AMP and then transferred to the acceptor end of tRNA(Glu). This is Glutamate--tRNA ligase 2 from Rickettsia rickettsii (strain Iowa).